A 118-amino-acid polypeptide reads, in one-letter code: Large ribosomal subunit protein bL20 (118 aa).

It belongs to the bacterial ribosomal protein bL20 family.

Binds directly to 23S ribosomal RNA and is necessary for the in vitro assembly process of the 50S ribosomal subunit. It is not involved in the protein synthesizing functions of that subunit. This is Large ribosomal subunit protein bL20 from Staphylococcus aureus (strain Mu3 / ATCC 700698).